The primary structure comprises 158 residues: N-acetylgalactosamine-specific phosphotransferase enzyme IIB component 1 (158 aa).

A PTS EIIB type-4 domain is found at 1–158 (MTSPNILLTR…PGDQKEQIPD (158 aa)). His17 (pros-phosphohistidine intermediate) is an active-site residue.

The protein resides in the cytoplasm. Functionally, the phosphoenolpyruvate-dependent sugar phosphotransferase system (sugar PTS), a major carbohydrate active -transport system, catalyzes the phosphorylation of incoming sugar substrates concomitantly with their translocation across the cell membrane. This system is involved in N-acetylgalactosamine transport. This chain is N-acetylgalactosamine-specific phosphotransferase enzyme IIB component 1 (agaB), found in Escherichia coli (strain K12).